Here is a 365-residue protein sequence, read N- to C-terminus: Chorismate synthase (365 aa).

A compositionally biased stretch (basic and acidic residues) spans 41-51 (IQKELDRRRPG). The interval 41–62 (IQKELDRRRPGQSEVSTPRSEA) is disordered. Arg48 lines the NADP(+) pocket. Residues 125-127 (RSS), Gly285, 300-304 (KPTPS), and Arg327 contribute to the FMN site.

Belongs to the chorismate synthase family. FMNH2 serves as cofactor.

The catalysed reaction is 5-O-(1-carboxyvinyl)-3-phosphoshikimate = chorismate + phosphate. It functions in the pathway metabolic intermediate biosynthesis; chorismate biosynthesis; chorismate from D-erythrose 4-phosphate and phosphoenolpyruvate: step 7/7. Catalyzes the anti-1,4-elimination of the C-3 phosphate and the C-6 proR hydrogen from 5-enolpyruvylshikimate-3-phosphate (EPSP) to yield chorismate, which is the branch point compound that serves as the starting substrate for the three terminal pathways of aromatic amino acid biosynthesis. This reaction introduces a second double bond into the aromatic ring system. The sequence is that of Chorismate synthase from Methanosarcina mazei (strain ATCC BAA-159 / DSM 3647 / Goe1 / Go1 / JCM 11833 / OCM 88) (Methanosarcina frisia).